A 511-amino-acid polypeptide reads, in one-letter code: Maturase K (511 aa).

The protein belongs to the intron maturase 2 family. MatK subfamily.

The protein localises to the plastid. It is found in the chloroplast. In terms of biological role, usually encoded in the trnK tRNA gene intron. Probably assists in splicing its own and other chloroplast group II introns. The sequence is that of Maturase K from Phleum pratense (Common timothy).